The primary structure comprises 101 residues: UPF0213 protein VC_A0739 (101 aa).

Positions 9–85 (SPWFVYLVRC…KALSKSQKEA (77 aa)) constitute a GIY-YIG domain.

It belongs to the UPF0213 family.

This is UPF0213 protein VC_A0739 from Vibrio cholerae serotype O1 (strain ATCC 39315 / El Tor Inaba N16961).